A 527-amino-acid polypeptide reads, in one-letter code: Bifunctional purine biosynthesis protein PurH (527 aa).

An MGS-like domain is found at 9–156; the sequence is NAKRPIRRAL…KNHPSVAVVV (148 aa).

The protein belongs to the PurH family.

The catalysed reaction is (6R)-10-formyltetrahydrofolate + 5-amino-1-(5-phospho-beta-D-ribosyl)imidazole-4-carboxamide = 5-formamido-1-(5-phospho-D-ribosyl)imidazole-4-carboxamide + (6S)-5,6,7,8-tetrahydrofolate. The enzyme catalyses IMP + H2O = 5-formamido-1-(5-phospho-D-ribosyl)imidazole-4-carboxamide. It functions in the pathway purine metabolism; IMP biosynthesis via de novo pathway; 5-formamido-1-(5-phospho-D-ribosyl)imidazole-4-carboxamide from 5-amino-1-(5-phospho-D-ribosyl)imidazole-4-carboxamide (10-formyl THF route): step 1/1. The protein operates within purine metabolism; IMP biosynthesis via de novo pathway; IMP from 5-formamido-1-(5-phospho-D-ribosyl)imidazole-4-carboxamide: step 1/1. The chain is Bifunctional purine biosynthesis protein PurH from Mycolicibacterium paratuberculosis (strain ATCC BAA-968 / K-10) (Mycobacterium paratuberculosis).